The chain runs to 143 residues: Ribosome-binding factor A (143 aa).

The interval 117–143 is disordered; the sequence is DAEIARRSQGAMPAGEADPYRHSDEEE. Residues 134–143 are compositionally biased toward basic and acidic residues; sequence DPYRHSDEEE.

Belongs to the RbfA family. In terms of assembly, monomer. Binds 30S ribosomal subunits, but not 50S ribosomal subunits or 70S ribosomes.

Its subcellular location is the cytoplasm. In terms of biological role, one of several proteins that assist in the late maturation steps of the functional core of the 30S ribosomal subunit. Associates with free 30S ribosomal subunits (but not with 30S subunits that are part of 70S ribosomes or polysomes). Required for efficient processing of 16S rRNA. May interact with the 5'-terminal helix region of 16S rRNA. The chain is Ribosome-binding factor A from Cutibacterium acnes (strain DSM 16379 / KPA171202) (Propionibacterium acnes).